A 458-amino-acid polypeptide reads, in one-letter code: Argininosuccinate lyase (458 aa).

Belongs to the lyase 1 family. Argininosuccinate lyase subfamily.

Its subcellular location is the cytoplasm. It catalyses the reaction 2-(N(omega)-L-arginino)succinate = fumarate + L-arginine. It functions in the pathway amino-acid biosynthesis; L-arginine biosynthesis; L-arginine from L-ornithine and carbamoyl phosphate: step 3/3. This Actinobacillus pleuropneumoniae serotype 7 (strain AP76) protein is Argininosuccinate lyase.